The following is a 288-amino-acid chain: Rhythmically expressed gene 5 protein (288 aa).

Expressed in head, but not in the body. Expression levels oscillate with the circadian rhythm.

In terms of biological role, involved in the generation of biological rhythms (Potential). In the head, oscillates in abundance with a daily peak during early night, even under constant darkness. Oscillation is dependent on period (per) function. This is Rhythmically expressed gene 5 protein (Reg-5) from Drosophila melanogaster (Fruit fly).